The chain runs to 153 residues: 3-hydroxyacyl-[acyl-carrier-protein] dehydratase FabZ (153 aa).

H57 is an active-site residue.

Belongs to the thioester dehydratase family. FabZ subfamily.

The protein resides in the cytoplasm. The enzyme catalyses a (3R)-hydroxyacyl-[ACP] = a (2E)-enoyl-[ACP] + H2O. Functionally, involved in unsaturated fatty acids biosynthesis. Catalyzes the dehydration of short chain beta-hydroxyacyl-ACPs and long chain saturated and unsaturated beta-hydroxyacyl-ACPs. This is 3-hydroxyacyl-[acyl-carrier-protein] dehydratase FabZ from Aeromonas salmonicida (strain A449).